The primary structure comprises 275 residues: Phosphatidylglycerol--prolipoprotein diacylglyceryl transferase (275 aa).

Helical transmembrane passes span 18–38 (IEVH…YFIA), 55–75 (IIFW…VIFQ), and 89–109 (IWHG…TGVI). Arg-137 serves as a coordination point for a 1,2-diacyl-sn-glycero-3-phospho-(1'-sn-glycerol). 2 helical membrane-spanning segments follow: residues 203-223 (IGET…FVEG) and 235-255 (IRVA…MIIY).

Belongs to the Lgt family.

The protein localises to the cell membrane. It catalyses the reaction L-cysteinyl-[prolipoprotein] + a 1,2-diacyl-sn-glycero-3-phospho-(1'-sn-glycerol) = an S-1,2-diacyl-sn-glyceryl-L-cysteinyl-[prolipoprotein] + sn-glycerol 1-phosphate + H(+). It participates in protein modification; lipoprotein biosynthesis (diacylglyceryl transfer). Functionally, catalyzes the transfer of the diacylglyceryl group from phosphatidylglycerol to the sulfhydryl group of the N-terminal cysteine of a prolipoprotein, the first step in the formation of mature lipoproteins. This is Phosphatidylglycerol--prolipoprotein diacylglyceryl transferase from Staphylococcus carnosus (strain TM300).